Consider the following 590-residue polypeptide: MLSKQIIGSEKTGRFALLDSIVRHGVIHIFGYPGGAILPIYDELYAWEELSLIKNILVRHEQGASHAADAYSRSTGKVGVCFATSGPGATNLVSGIATAHIDSVPILAITGQVGRPFIGTDAFQEVDIFGITLPIVKHSYVVRDPRDMSRIVAEAFYICKHGRPGPVLIDVPKDVGLEKFNYFSVEPGQVKIPGCRPLSNLKSRQILMAAKMIQQSSQPLLYIGGGAIISDAHSIIKELVDLYKIPVTTTLMGKGIFNEDSEFCLGMLGMHGTAYANFAVSECDLLIALGARFDDRVTGKLDEFACNAQVIHVDIDPAEVGKNRIPQVAIVGDVTEVVTSLLNLLKNNFKPYPEQIISWQERIHRWRQQYPLLVPKKSTSISPQEILVTTNQLAQDAYFTTDVGQHQMWSAQFLKVKSKHWISSAGLGTMGYGLPAAIGAQVAHPNELVICVSGDSSFQMNMQELGTIAQYKLPIKIVIINNRWQGMVRQWQQAFYGERYSHSRMTEGAPNFQKLAEAFGIKAFTVNNRQNMESSLKDAMKYPGPVLLDCQVTENENCYPMVAPGKSNAQMIGIAKPQRGTASNYVSRNI.

E61 lines the thiamine diphosphate pocket. FAD contacts are provided by residues R163, 271-292, and 314-333; these read HGTAYANFAVSECDLLIALGAR and DIDPAEVGKNRIPQVAIVGD. The thiamine pyrophosphate binding stretch occupies residues 405 to 484; that stretch reads QHQMWSAQFL…IKIVIINNRW (80 aa). D455 and N482 together coordinate Mg(2+).

The protein belongs to the TPP enzyme family. Dimer of large and small chains. Requires Mg(2+) as cofactor. It depends on thiamine diphosphate as a cofactor.

The protein localises to the plastid. It is found in the chloroplast. The catalysed reaction is 2 pyruvate + H(+) = (2S)-2-acetolactate + CO2. It functions in the pathway amino-acid biosynthesis; L-isoleucine biosynthesis; L-isoleucine from 2-oxobutanoate: step 1/4. It participates in amino-acid biosynthesis; L-valine biosynthesis; L-valine from pyruvate: step 1/4. The sequence is that of Acetolactate synthase large subunit (ilvB) from Porphyra purpurea (Red seaweed).